We begin with the raw amino-acid sequence, 255 residues long: Acetylglutamate kinase (255 aa).

Residues 40–41 (GG), R62, and N153 each bind substrate.

It belongs to the acetylglutamate kinase family. ArgB subfamily.

It localises to the cytoplasm. The catalysed reaction is N-acetyl-L-glutamate + ATP = N-acetyl-L-glutamyl 5-phosphate + ADP. The protein operates within amino-acid biosynthesis; L-arginine biosynthesis; N(2)-acetyl-L-ornithine from L-glutamate: step 2/4. In terms of biological role, catalyzes the ATP-dependent phosphorylation of N-acetyl-L-glutamate. The polypeptide is Acetylglutamate kinase (Bacillus cereus (strain G9842)).